The primary structure comprises 509 residues: Protein root UVB sensitive 5 (509 aa).

A disordered region spans residues 22–49 (CQPKRRRVEHLRCSAQPSSIREDDEDAD).

Belongs to the RUS1 family.

This chain is Protein root UVB sensitive 5, found in Arabidopsis thaliana (Mouse-ear cress).